The primary structure comprises 249 residues: Triosephosphate isomerase (249 aa).

9–11 (NWK) is a substrate binding site. The active-site Electrophile is the His-95. The Proton acceptor role is filled by Glu-165. Substrate contacts are provided by residues Gly-171, Ser-211, and 232-233 (GG).

This sequence belongs to the triosephosphate isomerase family. As to quaternary structure, homodimer.

The protein resides in the cytoplasm. The catalysed reaction is D-glyceraldehyde 3-phosphate = dihydroxyacetone phosphate. It participates in carbohydrate biosynthesis; gluconeogenesis. It functions in the pathway carbohydrate degradation; glycolysis; D-glyceraldehyde 3-phosphate from glycerone phosphate: step 1/1. Its function is as follows. Involved in the gluconeogenesis. Catalyzes stereospecifically the conversion of dihydroxyacetone phosphate (DHAP) to D-glyceraldehyde-3-phosphate (G3P). This Chlorobium phaeobacteroides (strain DSM 266 / SMG 266 / 2430) protein is Triosephosphate isomerase.